The chain runs to 128 residues: Large ribosomal subunit protein eL8 (128 aa).

This sequence belongs to the eukaryotic ribosomal protein eL8 family. As to quaternary structure, part of the 50S ribosomal subunit. Probably part of the RNase P complex.

The protein resides in the cytoplasm. Functionally, multifunctional RNA-binding protein that recognizes the K-turn motif in ribosomal RNA, the RNA component of RNase P, box H/ACA, box C/D and box C'/D' sRNAs. The polypeptide is Large ribosomal subunit protein eL8 (Staphylothermus marinus (strain ATCC 43588 / DSM 3639 / JCM 9404 / F1)).